The sequence spans 96 residues: UPF0729 protein AGAP000931 (96 aa).

The segment at 65-96 (VPPGHDPVGPTVAADTATSDAVDDAASSKKTL) is disordered. Positions 75–96 (TVAADTATSDAVDDAASSKKTL) are enriched in low complexity.

The protein belongs to the UPF0729 family.

In Anopheles gambiae (African malaria mosquito), this protein is UPF0729 protein AGAP000931.